The following is a 181-amino-acid chain: MKNVTDSFISLSSAEGFGLNTNILETNIINLSVVLGVLIYFGKGVLSNLLDNRKQKISSTIQSSEELCKGAANQLEQARARLREVERRVREIRVNGYSQIQQEKNDLINVASINLKQLENLKNETIHLEQERVIELVQKQISYQAVQRALGTLNSRLNSELHLRTIEHNIDLLLAMKNITD.

Residues 28–50 (IINLSVVLGVLIYFGKGVLSNLL) traverse the membrane as a helical segment.

It belongs to the ATPase B chain family. As to quaternary structure, F-type ATPases have 2 components, F(1) - the catalytic core - and F(0) - the membrane proton channel. F(1) has five subunits: alpha(3), beta(3), gamma(1), delta(1), epsilon(1). F(0) has four main subunits: a(1), b(1), b'(1) and c(10-14). The alpha and beta chains form an alternating ring which encloses part of the gamma chain. F(1) is attached to F(0) by a central stalk formed by the gamma and epsilon chains, while a peripheral stalk is formed by the delta, b and b' chains.

It is found in the plastid. The protein localises to the chloroplast thylakoid membrane. F(1)F(0) ATP synthase produces ATP from ADP in the presence of a proton or sodium gradient. F-type ATPases consist of two structural domains, F(1) containing the extramembraneous catalytic core and F(0) containing the membrane proton channel, linked together by a central stalk and a peripheral stalk. During catalysis, ATP synthesis in the catalytic domain of F(1) is coupled via a rotary mechanism of the central stalk subunits to proton translocation. Its function is as follows. Component of the F(0) channel, it forms part of the peripheral stalk, linking F(1) to F(0). The chain is ATP synthase subunit b, chloroplastic from Cryptomeria japonica (Japanese cedar).